A 334-amino-acid chain; its full sequence is Beta-hexosaminidase (334 aa).

Substrate-binding positions include aspartate 60, arginine 68, arginine 133, and 163–164 (KH). Catalysis depends on histidine 176, which acts as the Proton donor/acceptor. Aspartate 247 acts as the Nucleophile in catalysis.

The protein belongs to the glycosyl hydrolase 3 family. NagZ subfamily.

The protein resides in the cytoplasm. It catalyses the reaction Hydrolysis of terminal non-reducing N-acetyl-D-hexosamine residues in N-acetyl-beta-D-hexosaminides.. It participates in cell wall biogenesis; peptidoglycan recycling. Plays a role in peptidoglycan recycling by cleaving the terminal beta-1,4-linked N-acetylglucosamine (GlcNAc) from peptide-linked peptidoglycan fragments, giving rise to free GlcNAc, anhydro-N-acetylmuramic acid and anhydro-N-acetylmuramic acid-linked peptides. In Xanthomonas oryzae pv. oryzae (strain MAFF 311018), this protein is Beta-hexosaminidase.